A 79-amino-acid chain; its full sequence is Large ribosomal subunit protein bL28 (79 aa).

It belongs to the bacterial ribosomal protein bL28 family.

The protein is Large ribosomal subunit protein bL28 of Porphyromonas gingivalis (strain ATCC 33277 / DSM 20709 / CIP 103683 / JCM 12257 / NCTC 11834 / 2561).